A 276-amino-acid chain; its full sequence is Large ribosomal subunit protein uL2 (276 aa).

Disordered stretches follow at residues 35 to 55 and 222 to 276; these read APLHKKGGRNNQGRLTVRHQG and GSVM…RRKK. Residues 258-276 show a composition bias toward basic residues; the sequence is KTRKKNKHSDKYIVRRRKK.

It belongs to the universal ribosomal protein uL2 family. In terms of assembly, part of the 50S ribosomal subunit. Forms a bridge to the 30S subunit in the 70S ribosome.

Its function is as follows. One of the primary rRNA binding proteins. Required for association of the 30S and 50S subunits to form the 70S ribosome, for tRNA binding and peptide bond formation. It has been suggested to have peptidyltransferase activity; this is somewhat controversial. Makes several contacts with the 16S rRNA in the 70S ribosome. The chain is Large ribosomal subunit protein uL2 from Shouchella clausii (strain KSM-K16) (Alkalihalobacillus clausii).